The primary structure comprises 668 residues: S-adenosyl-L-methionine-dependent tRNA 4-demethylwyosine synthase TYW1B (668 aa).

In terms of domain architecture, Flavodoxin-like spans 37 to 191 (CVQIVIEMQG…NFRAWKTKFI (155 aa)). FMN-binding positions include 43–47 (EMQGF) and 130–162 (VFGL…HRVM). The interval 202–269 (RKKSCGGHCK…QSLNSIVDVE (68 aa)) is disordered. 2 stretches are compositionally biased toward basic and acidic residues: residues 213 to 223 (GKCESHQHGSE) and 233 to 243 (DELHHRDTKEE). The span at 244–255 (EPFESSSEEEFG) shows a compositional bias: acidic residues. The region spanning 336–580 (LWNESHRCME…VDLIPEYEIA (245 aa)) is the Radical SAM core domain. [4Fe-4S] cluster-binding residues include C352, C356, and C359.

The protein belongs to the TYW1 family. It depends on [4Fe-4S] cluster as a cofactor.

It carries out the reaction N(1)-methylguanosine(37) in tRNA(Phe) + pyruvate + S-adenosyl-L-methionine = 4-demethylwyosine(37) in tRNA(Phe) + 5'-deoxyadenosine + L-methionine + CO2 + H2O. The protein operates within tRNA modification; wybutosine-tRNA(Phe) biosynthesis. Functionally, probable component of the wybutosine biosynthesis pathway. Wybutosine is a hyper modified guanosine with a tricyclic base found at the 3'-position adjacent to the anticodon of eukaryotic phenylalanine tRNA. Catalyzes the condensation of N-methylguanine with 2 carbon atoms from pyruvate to form the tricyclic 4-demethylwyosine, an intermediate in wybutosine biosynthesis. The protein is S-adenosyl-L-methionine-dependent tRNA 4-demethylwyosine synthase TYW1B (TYW1B) of Homo sapiens (Human).